A 140-amino-acid chain; its full sequence is Natriuretic peptides A (140 aa).

Residues 1–24 (MDTRGSFSCGFLLLLLIQLQPSRA) form the signal peptide. Residues 25-111 (NPIYNLSPAK…KRLRGVQMPR (87 aa)) constitute a propeptide that is removed on maturation. The segment at 55 to 94 (ALESNPDLQEPQTQEEIPPELTDDSDEQKAEPKLASNTPL) is disordered. A compositionally biased stretch (acidic residues) spans 71 to 80 (IPPELTDDSD). Cysteines 118 and 134 form a disulfide.

Belongs to the natriuretic peptide family. Cleaved by CORIN upon secretion to produce the functional hormone.

The protein resides in the secreted. Hormone playing a key role in cardiovascular homeostasis through regulation of natriuresis, diuresis, and vasodilation. Specifically binds and stimulates the cGMP production of the NPR1 receptor. Binds the clearance receptor NPR3. This Gallus gallus (Chicken) protein is Natriuretic peptides A (NPPA).